Reading from the N-terminus, the 522-residue chain is MKYIQAFMNNFLGNSPDWYKVTIGVFLVINPFIFWFHPFIAGWLLVAEFIFTLAMALKCYPLQPGGMLALEAVTIGMTSPEHVKAEILANFEVILLLMFMVAGIYFMKQLLLYAFTKLLLRIRSKLTLSLAFCLTAAFLSAFLDALTVIAVIISVAMGFYGVYHKVASGGTFNDPSDITNDAKIKQNMETLEQFRAFLRSLMMHAAVGTALGGVMTLVGEPQNLIIAEQAGWGFKEFFFRMSPVTLLTLISGVVTCITVERLRLCGYGEKLPRKVWGVLAKFDRAHEEQMTTQDRVKLGVQVFVGIWLIIGLAFHLASVGLIGLTVIILTTAYCGITDEHAIGRAFQESLPFLSLLVVFFSVVAVIIDQHLFAPVIELVLNASESVQLLLFYIFNGVLSAISDNVFVATVYINEAKNALTAGAISPYQFEMISVAINTGTNLPSVATPNGQAAFLFLLTSSISPLIRLSYGRMVYMALPYTIVLSIVGLLAVEYVLPGMTQWLAQVGLIESPHIPMTSVFGH.

The next 11 membrane-spanning stretches (helical) occupy residues Val25 to Leu45, Phe49 to Ala69, Ile87 to Met107, Leu128 to Val162, Leu201 to Pro221, Phe237 to Ile257, Val302 to Ile322, Leu356 to Ile376, Leu388 to Ala408, Ala446 to Ile466, and Met476 to Leu496.

The protein belongs to the NhaB Na(+)/H(+) (TC 2.A.34) antiporter family.

The protein resides in the cell inner membrane. The enzyme catalyses 2 Na(+)(in) + 3 H(+)(out) = 2 Na(+)(out) + 3 H(+)(in). Functionally, na(+)/H(+) antiporter that extrudes sodium in exchange for external protons. The protein is Na(+)/H(+) antiporter NhaB of Actinobacillus succinogenes (strain ATCC 55618 / DSM 22257 / CCUG 43843 / 130Z).